The chain runs to 121 residues: Spermidine export protein MdtJ (121 aa).

The next 4 membrane-spanning stretches (helical) occupy residues 1-21, 32-52, 55-75, and 82-102; these read MYIYWILLGLAIATEITGTLS, GGFILMLVMISLSYIFLSFAV, IALGVAYALWEGIGILFITLF, and ESLSLMKIAGLTTLVAGIVLI.

Belongs to the drug/metabolite transporter (DMT) superfamily. Small multidrug resistance (SMR) (TC 2.A.7.1) family. MdtJ subfamily. As to quaternary structure, forms a complex with MdtI.

The protein resides in the cell inner membrane. In terms of biological role, catalyzes the excretion of spermidine. The chain is Spermidine export protein MdtJ from Escherichia coli O127:H6 (strain E2348/69 / EPEC).